Reading from the N-terminus, the 103-residue chain is Large ribosomal subunit protein bL21 (103 aa).

This sequence belongs to the bacterial ribosomal protein bL21 family. In terms of assembly, part of the 50S ribosomal subunit. Contacts protein L20.

Functionally, this protein binds to 23S rRNA in the presence of protein L20. This Nitrosospira multiformis (strain ATCC 25196 / NCIMB 11849 / C 71) protein is Large ribosomal subunit protein bL21.